The chain runs to 81 residues: Putative membrane protein insertion efficiency factor (81 aa).

Belongs to the UPF0161 family.

The protein localises to the cell inner membrane. Functionally, could be involved in insertion of integral membrane proteins into the membrane. This is Putative membrane protein insertion efficiency factor from Thermosipho melanesiensis (strain DSM 12029 / CIP 104789 / BI429).